A 307-amino-acid chain; its full sequence is Ethylmalonyl-CoA decarboxylase (307 aa).

A2 carries the N-acetylalanine modification. K217 bears the N6-acetyllysine; alternate mark. Residue K217 is modified to N6-succinyllysine; alternate. Residue K301 is modified to N6-succinyllysine.

Belongs to the enoyl-CoA hydratase/isomerase family.

It localises to the cytoplasm. Its subcellular location is the cytosol. It catalyses the reaction (2S)-ethylmalonyl-CoA + H(+) = butanoyl-CoA + CO2. The enzyme catalyses (S)-methylmalonyl-CoA + H(+) = propanoyl-CoA + CO2. It carries out the reaction (2R)-ethylmalonyl-CoA + H(+) = butanoyl-CoA + CO2. In terms of biological role, decarboxylates ethylmalonyl-CoA, a potentially toxic metabolite, to form butyryl-CoA, suggesting it might be involved in metabolite proofreading. Acts preferentially on (S)-ethylmalonyl-CoA but also has some activity on the (R)-isomer. Also has methylmalonyl-CoA decarboxylase activity at lower level. This Homo sapiens (Human) protein is Ethylmalonyl-CoA decarboxylase (ECHDC1).